Consider the following 246-residue polypeptide: Breast cancer metastasis-suppressor 1 (246 aa).

Residues 1-57 (MPVQPPSKDTEEMEAEGDSAAEMNGEEEESEEERSGSQTESEEESSEMDDEDYERRR) form a disordered region. 2 stretches are compositionally biased toward acidic residues: residues 11 to 32 (EEMEAEGDSAAEMNGEEEESEE) and 40 to 52 (ESEEESSEMDDED). A coiled-coil region spans residues 51-98 (EDYERRRSECVSEMLDLEKQFSELKEKLFRERLSQLRLRLEEVGAERA). Glycyl lysine isopeptide (Lys-Gly) (interchain with G-Cter in SUMO2) cross-links involve residues Lys-184 and Lys-242.

Belongs to the BRMS1 family. Homohexamer (Potential). Interacts with SNX6, HDAC1 and RELA. Interacts with ARID4A. Identified in mSin3A corepressor complexes together with SIN3A, SIN3B, RBBP4, RBBP7, SAP30, SUDS3, ARID4A, HDAC1 and HDAC2. Interacts with SPOP; this recruits the protein to a ubiquitin ligase complex containing SPOP and CUL3. In terms of processing, ubiquitinated by a cullin-RING-based BCR (BTB-CUL3-RBX1) E3 ubiquitin-protein ligase complex containing SPOP, leading to proteasomal degradation. In terms of tissue distribution, expression levels are higher in term placentas than in early placentas. Low levels of expression observed in normal pregnancies and in molar pregnancies.

It is found in the nucleus. The protein localises to the cytoplasm. Functionally, transcriptional repressor. Down-regulates transcription activation by NF-kappa-B by promoting the deacetylation of RELA at 'Lys-310'. Promotes HDAC1 binding to promoter regions. Down-regulates expression of anti-apoptotic genes that are controlled by NF-kappa-B. Promotes apoptosis in cells that have inadequate adherence to a substrate, a process called anoikis, and may thereby inhibit metastasis. May be a mediator of metastasis suppression in breast carcinoma. The protein is Breast cancer metastasis-suppressor 1 (BRMS1) of Homo sapiens (Human).